The primary structure comprises 143 residues: Competence protein ComGD (143 aa).

Positions 1-10 (MNIKLNEEKG) are excised as a propeptide. Position 11 is an N-methylphenylalanine (F11). Residues 11-31 (FTLLESLLVLSLASILLVAVF) traverse the membrane as a helical segment.

As to quaternary structure, the transformation pili are flexible filaments, consisting mainly of the major pilin ComGC and smaller amounts of the minor pilins, including at least ComGD, ComGF and ComGG. Interacts with ComGF. Interacts with ComGG. Processing of ComGD in competent cells requires ComC.

The protein resides in the cell membrane. The protein localises to the cell surface. Its function is as follows. Required for formation of the type IV-like pilus (T4P) that plays a role in transformation. Transformation pili are dynamically extended and retracted, perhaps thereby promoting DNA uptake and transformation. Required for transformation and DNA binding. The protein is Competence protein ComGD (comGD) of Bacillus subtilis (strain 168).